Consider the following 148-residue polypeptide: UPF0756 membrane protein YeaL (148 aa).

4 consecutive transmembrane segments (helical) span residues Ala14–Val34, Leu51–Leu71, Leu86–Met106, and Val121–Val141.

The protein belongs to the UPF0756 family.

It localises to the cell membrane. The sequence is that of UPF0756 membrane protein YeaL from Shigella boydii serotype 18 (strain CDC 3083-94 / BS512).